A 505-amino-acid polypeptide reads, in one-letter code: MKFKLHVNSARQYKDLWNMSDDKPFLCTAPGCGQRFTNEDHLAVHKHKHEMTLKFGPARNDSVIVADQTPTPTRFLKNCEEVGLFNELASPFENEFKKASEDDIKKMPLDLSPLATPIIRSKIEEPSVVETTHQDSPLPHPESTTSDEKEVPLAQTAQPTSAIVRPASLQVPNVLLTSSDSSVIIQQAVPSPTSSTVITQAPSSNRPIVPVPGPFPLLLHLPNGQTMPVAIPASITSSNVHVPAAVPLVRPVTMVPSVPGIPGPSSPQPVQSEAKMRLKAALTQQHPPVTNGDTVKGHGSGLVRTQSEESRPQSLQQPATSTTETPASPAHTTPQTQSTSGRRRRAANEDPDEKRRKFLERNRAAASRCRQKRKVWVQSLEKKAEDLSSLNGQLQSEVTLLRNEVAQLKQLLLAHKDCPVTAMQKKSGYHTADKDDSSEDISVPSSPHTEAIQHSSVSTSNGVSSTSKAEAVATSVLTQMADQSTEPALSQIVMAPSSQSQPSGS.

Residues 1 to 7 carry the Nuclear export signal 1 (N-NES) motif; that stretch reads MKFKLHV. The C2H2-type zinc-finger motif lies at 25 to 49; sequence FLCTAPGCGQRFTNEDHLAVHKHKH. Position 52 is a phosphothreonine; by PKC/PRKCH (T52). A Phosphoserine; by VRK1 modification is found at S62. Residue T69 is modified to Phosphothreonine; by MAPK11 and MAPK14. At T71 the chain carries Phosphothreonine; by MAPK1, MAPK3, MAPK11, MAPK12, MAPK14 and PLK3. A Phosphothreonine; by VRK1 modification is found at T73. Residues S90 and S112 each carry the phosphoserine modification. T116 is modified (phosphothreonine). Phosphoserine; by PKC/PRKCA and PKC/PRKCB is present on S121. Disordered stretches follow at residues 125–155 and 259–373; these read EPSVVETTHQDSPLPHPESTTSDEKEVPLAQ and PGIP…RQKR. Phosphoserine is present on S136. Positions 282–293 are enriched in polar residues; sequence LTQQHPPVTNGD. An essential for its histone acetyltransferase activity region spans residues 296 to 299; sequence KGHG. Residues 318-334 show a composition bias toward low complexity; it reads PATSTTETPASPAHTTP. A Phosphoserine modification is found at S328. S340 carries the post-translational modification Phosphoserine; by PKC/PRKCA and PKC/PRKCB. Basic and acidic residues predominate over residues 346 to 363; that stretch reads AANEDPDEKRRKFLERNR. The bZIP domain maps to 352-415; sequence DEKRRKFLER…AQLKQLLLAH (64 aa). A basic motif region spans residues 354-374; that stretch reads KRRKFLERNRAAASRCRQKRK. An N6-acetyllysine modification is found at K357. S367 is modified (phosphoserine; by PKC/PRKCA and PKC/PRKCB). Residue K374 is modified to N6-acetyllysine. The tract at residues 380–408 is leucine-zipper; that stretch reads LEKKAEDLSSLNGQLQSEVTLLRNEVAQL. The Nuclear export signal 2 (C-NES) signature appears at 405 to 414; it reads VAQLKQLLLA. The tract at residues 425 to 472 is disordered; sequence KKSGYHTADKDDSSEDISVPSSPHTEAIQHSSVSTSNGVSSTSKAEAV. Residues S442 and S446 each carry the phosphoserine modification. The span at 443 to 454 shows a compositional bias: polar residues; it reads VPSSPHTEAIQH. Positions 455–467 are enriched in low complexity; sequence SSVSTSNGVSSTS. Phosphoserine; by ATM is present on residues S490 and S498.

This sequence belongs to the bZIP family. ATF subfamily. Binds DNA as a dimer and can form a homodimer in the absence of DNA. Can form a heterodimer with JUN. Heterodimerization is essential for its transcriptional activity. Interacts with SMAD3 and SMAD4. Binds through its N-terminal region to UTF1 which acts as a coactivator of ATF2 transcriptional activity. Interacts with the HK1/VDAC1 complex. Interacts with NBN, MRE11, XPO1, KAT5 and CUL3. Phosphorylation of Thr-69 by MAPK14 and MAPK11, and at Thr-71 by MAPK1/ERK2, MAPK3/ERK1, MAPK11, MAPK12 and MAPK14 in response to external stimulus like insulin causes increased transcriptional activity. Phosphorylated by PLK3 following hyperosmotic stress. Also phosphorylated and activated by JNK and CaMK4. ATM-mediated phosphorylation at Ser-490 and Ser-498 stimulates its function in DNA damage response. Phosphorylation at Ser-62, Thr-73 and Ser-121 activates its transcriptional activity. Phosphorylation at Thr-69 or Thr-71 enhances acetylation of histones H2B and H4. In terms of tissue distribution, ubiquitously expressed, with more abundant expression in the brain.

The protein localises to the nucleus. The protein resides in the cytoplasm. It is found in the mitochondrion outer membrane. Transcriptional activator which regulates the transcription of various genes, including those involved in anti-apoptosis, cell growth, and DNA damage response. Dependent on its binding partner, binds to CRE (cAMP response element) consensus sequences (5'-TGACGTCA-3') or to AP-1 (activator protein 1) consensus sequences (5'-TGACTCA-3'). In the nucleus, contributes to global transcription and the DNA damage response, in addition to specific transcriptional activities that are related to cell development, proliferation and death. In the cytoplasm, interacts with and perturbs HK1- and VDAC1-containing complexes at the mitochondrial outer membrane, thereby impairing mitochondrial membrane potential, inducing mitochondrial leakage and promoting cell death. The phosphorylated form (mediated by ATM) plays a role in the DNA damage response and is involved in the ionizing radiation (IR)-induced S phase checkpoint control and in the recruitment of the MRN complex into the IR-induced foci (IRIF). Exhibits histone acetyltransferase (HAT) activity which specifically acetylates histones H2B and H4 in vitro. In concert with CUL3 and RBX1, promotes the degradation of KAT5 thereby attenuating its ability to acetylate and activate ATM. Can elicit oncogenic or tumor suppressor activities depending on the tissue or cell type. The chain is Cyclic AMP-dependent transcription factor ATF-2 (ATF2) from Homo sapiens (Human).